Consider the following 385-residue polypeptide: MKKLSILGVTGSIGTQALDVIKKSNGELKLIGATANSSVNKMIEIIEEFNPKYVGMMDKNSADKLEKYCKERNKQTIVLSQMEGLNKIASLEEIDIVLTSLVGMIGLEPTLEAIKAKKDIALANKETLVVAGELVMSEAKKNNVKILPVDSEHSAIYQSLRGNDLKTLNKIILTASGGPFRGKKLCDLNDIGVDDALNHPKWNMGRKISIDSATLMNKGLEVIEAHWLFNCDYDNIQVVIHPQSVVHSMVEYCDGSIIAQLGAADMRLPIQYAFNYTERKNLIAKTLDFYEVAQLTFEKPDLETFKPLKLAFKAGKQGGLMPTILNGANEAAVALFLDEKIEFLDIFNIIENCMNTFEEETKKPLTLENIIELDKKVKKYVVDMK.

Residues threonine 10, glycine 11, serine 12, isoleucine 13, and asparagine 124 each contribute to the NADPH site. Lysine 125 contributes to the 1-deoxy-D-xylulose 5-phosphate binding site. Position 126 (glutamate 126) interacts with NADPH. Aspartate 150 is a binding site for Mn(2+). Residues serine 151, glutamate 152, serine 176, and histidine 199 each coordinate 1-deoxy-D-xylulose 5-phosphate. Glutamate 152 contacts Mn(2+). An NADPH-binding site is contributed by glycine 205. 1-deoxy-D-xylulose 5-phosphate-binding residues include serine 212, asparagine 217, lysine 218, and glutamate 221. A Mn(2+)-binding site is contributed by glutamate 221.

It belongs to the DXR family. It depends on Mg(2+) as a cofactor. Mn(2+) serves as cofactor.

It catalyses the reaction 2-C-methyl-D-erythritol 4-phosphate + NADP(+) = 1-deoxy-D-xylulose 5-phosphate + NADPH + H(+). The protein operates within isoprenoid biosynthesis; isopentenyl diphosphate biosynthesis via DXP pathway; isopentenyl diphosphate from 1-deoxy-D-xylulose 5-phosphate: step 1/6. Catalyzes the NADPH-dependent rearrangement and reduction of 1-deoxy-D-xylulose-5-phosphate (DXP) to 2-C-methyl-D-erythritol 4-phosphate (MEP). This chain is 1-deoxy-D-xylulose 5-phosphate reductoisomerase, found in Clostridium botulinum (strain Eklund 17B / Type B).